Consider the following 453-residue polypeptide: tRNA modification GTPase MnmE (453 aa).

Residues R22, E79, and K119 each coordinate (6S)-5-formyl-5,6,7,8-tetrahydrofolate. The region spanning 215–376 (GMKVVIAGRP…LRNHLKECMG (162 aa)) is the TrmE-type G domain. N225 provides a ligand contact to K(+). Residues 225 to 230 (NAGKSS), 244 to 250 (TDIAGTT), 269 to 272 (DTAG), and 334 to 337 (NKAD) each bind GTP. S229 provides a ligand contact to Mg(2+). T244, I246, and T249 together coordinate K(+). T250 is a binding site for Mg(2+). Residue K453 coordinates (6S)-5-formyl-5,6,7,8-tetrahydrofolate.

Belongs to the TRAFAC class TrmE-Era-EngA-EngB-Septin-like GTPase superfamily. TrmE GTPase family. As to quaternary structure, homodimer. Heterotetramer of two MnmE and two MnmG subunits. Requires K(+) as cofactor.

It localises to the cytoplasm. Functionally, exhibits a very high intrinsic GTPase hydrolysis rate. Involved in the addition of a carboxymethylaminomethyl (cmnm) group at the wobble position (U34) of certain tRNAs, forming tRNA-cmnm(5)s(2)U34. The protein is tRNA modification GTPase MnmE of Vibrio vulnificus (strain YJ016).